We begin with the raw amino-acid sequence, 85 residues long: UPF0291 protein SPH_1589 (85 aa).

The segment at 62 to 85 (TPEKLRQVQREKGLHGRSLDDPNS) is disordered.

The protein belongs to the UPF0291 family.

The protein resides in the cytoplasm. The polypeptide is UPF0291 protein SPH_1589 (Streptococcus pneumoniae (strain Hungary19A-6)).